A 564-amino-acid chain; its full sequence is E3 ubiquitin-protein ligase RNF168 (564 aa).

The RING-type zinc finger occupies 16–55 (CGICMEILVEPVTLPCNHTLCNPCFQSTVEKANLCCPFCR). Ser-70 is subject to Phosphoserine. Residues 110–128 (LSKPGELRREYEEEISKVE) carry the LR motif 1 motif. Ser-134 bears the Phosphoserine mark. The UMI motif motif lies at 143 to 151 (EEYIQRLLA). Disordered regions lie at residues 149-179 (LLAEEEEEEKRRTERRRSEMEEQLRGDEELA) and 193-291 (NILA…QGPE). A compositionally biased stretch (basic and acidic residues) spans 157–179 (EKRRTERRRSEMEEQLRGDEELA). The MIU motif 1 signature appears at 168-191 (MEEQLRGDEELARRLSTSINSNYE). Position 197 is a phosphoserine (Ser-197). Residue Lys-210 forms a Glycyl lysine isopeptide (Lys-Gly) (interchain with G-Cter in SUMO2) linkage. Residues 242–259 (KTEHGEDMCKSKETDSSD) show a composition bias toward basic and acidic residues. The segment covering 275-288 (PTHSPQTCPETQGQ) has biased composition (polar residues). Thr-348 and Thr-361 each carry phosphothreonine. Phosphoserine occurs at positions 413 and 414. The short motif at 438–461 (RHKQEEQDRLLALQLQKEADKEKM) is the MIU motif 2 element. The tract at residues 455–564 (EADKEKMVPN…QKSILQMFQR (110 aa)) is disordered. The short motif at 465-476 (RQKGSPDQYQLR) is the LR motif 2 element. The segment covering 466 to 480 (QKGSPDQYQLRTSSP) has biased composition (polar residues). Ser-469 is modified (phosphoserine). Over residues 491-515 (NVKDRNSPKQTADRSKSQRSRKGEY) the composition is skewed to basic and acidic residues. 2 stretches are compositionally biased toward polar residues: residues 519 to 531 (FESTWKGSVNGTK) and 555 to 564 (QKSILQMFQR). Lys-524 participates in a covalent cross-link: Glycyl lysine isopeptide (Lys-Gly) (interchain with G-Cter in SUMO2).

The protein belongs to the RNF168 family. Monomer. Interacts with UBE2N/UBC13. Sumoylated with SUMO1 by PIAS4 in response to double-strand breaks (DSBs). Post-translationally, ubiquitinated.

It localises to the nucleus. The enzyme catalyses S-ubiquitinyl-[E2 ubiquitin-conjugating enzyme]-L-cysteine + [acceptor protein]-L-lysine = [E2 ubiquitin-conjugating enzyme]-L-cysteine + N(6)-ubiquitinyl-[acceptor protein]-L-lysine.. Its pathway is protein modification; protein ubiquitination. Functionally, E3 ubiquitin-protein ligase required for accumulation of repair proteins to sites of DNA damage. Acts with UBE2N/UBC13 to amplify the RNF8-dependent histone ubiquitination. Recruited to sites of DNA damage at double-strand breaks (DSBs) by binding to ubiquitinated histone H2A and H2AX and amplifies the RNF8-dependent H2A ubiquitination, promoting the formation of 'Lys-63'-linked ubiquitin conjugates. This leads to concentrate ubiquitinated histones H2A and H2AX at DNA lesions to the threshold required for recruitment of TP53BP1 and BRCA1. Also recruited at DNA interstrand cross-links (ICLs) sites and promotes accumulation of 'Lys-63'-linked ubiquitination of histones H2A and H2AX, leading to recruitment of FAAP20 and Fanconi anemia (FA) complex, followed by interstrand cross-link repair. H2A ubiquitination also mediates the ATM-dependent transcriptional silencing at regions flanking DSBs in cis, a mechanism to avoid collision between transcription and repair intermediates. Also involved in class switch recombination in immune system, via its role in regulation of DSBs repair. Following DNA damage, promotes the ubiquitination and degradation of JMJD2A/KDM4A in collaboration with RNF8, leading to unmask H4K20me2 mark and promote the recruitment of TP53BP1 at DNA damage sites. Not able to initiate 'Lys-63'-linked ubiquitination in vitro; possibly due to partial occlusion of the UBE2N/UBC13-binding region. Catalyzes monoubiquitination of 'Lys-13' and 'Lys-15' of nucleosomal histone H2A (H2AK13Ub and H2AK15Ub, respectively). This is E3 ubiquitin-protein ligase RNF168 from Rattus norvegicus (Rat).